The chain runs to 360 residues: Photosystem II protein D1 3 (360 aa).

The next 3 membrane-spanning stretches (helical) occupy residues 29–46 (YVGW…TATI), 118–133 (HFLL…QWEL), and 142–156 (WICV…AAFA). Chlorophyll a is bound at residue H118. Position 126 (Y126) interacts with pheophytin a. [CaMn4O5] cluster-binding residues include D170 and E189. Residues 197-218 (FHMLGVAGVFGGSLFSAMHGSL) form a helical membrane-spanning segment. H198 is a chlorophyll a binding site. Residues H215 and 264-265 (SF) contribute to the a quinone site. Fe cation is bound at residue H215. Position 272 (H272) interacts with Fe cation. The helical transmembrane segment at 274–288 (FLGAWPVVGIWFTSM) threads the bilayer. H332, E333, D342, and A344 together coordinate [CaMn4O5] cluster. The propeptide occupies 345–360 (AGEATPVALTAPSIHG).

The protein belongs to the reaction center PufL/M/PsbA/D family. PSII is composed of 1 copy each of membrane proteins PsbA, PsbB, PsbC, PsbD, PsbE, PsbF, PsbH, PsbI, PsbJ, PsbK, PsbL, PsbM, PsbT, PsbX, PsbY, PsbZ, Psb30/Ycf12, peripheral proteins PsbO, CyanoQ (PsbQ), PsbU, PsbV and a large number of cofactors. It forms dimeric complexes. The D1/D2 heterodimer binds P680, chlorophylls that are the primary electron donor of PSII, and subsequent electron acceptors. It shares a non-heme iron and each subunit binds pheophytin, quinone, additional chlorophylls, carotenoids and lipids. D1 provides most of the ligands for the Mn4-Ca-O5 cluster of the oxygen-evolving complex (OEC). There is also a Cl(-1) ion associated with D1 and D2, which is required for oxygen evolution. The PSII complex binds additional chlorophylls, carotenoids and specific lipids. is required as a cofactor. Tyr-161 forms a radical intermediate that is referred to as redox-active TyrZ, YZ or Y-Z. In terms of processing, C-terminally processed by CtpA; processing is essential to allow assembly of the oxygen-evolving complex and thus photosynthetic growth.

It localises to the cellular thylakoid membrane. The catalysed reaction is 2 a plastoquinone + 4 hnu + 2 H2O = 2 a plastoquinol + O2. Photosystem II (PSII) is a light-driven water:plastoquinone oxidoreductase that uses light energy to abstract electrons from H(2)O, generating O(2) and a proton gradient subsequently used for ATP formation. It consists of a core antenna complex that captures photons, and an electron transfer chain that converts photonic excitation into a charge separation. The D1/D2 (PsbA/PsbD) reaction center heterodimer binds P680, the primary electron donor of PSII as well as several subsequent electron acceptors. In Synechococcus sp. (strain ATCC 27144 / PCC 6301 / SAUG 1402/1) (Anacystis nidulans), this protein is Photosystem II protein D1 3.